The primary structure comprises 133 residues: NLP effector protein 14 (133 aa).

The Conserved undecapeptide motifI I signature appears at M1–D9. Residues G16–E22 carry the Hepta-peptide GHRHDWE motif II motif.

The protein belongs to the Necrosis inducing protein (NPP1) family.

Its subcellular location is the secreted. Secreted effector that contributes strongly to virulence during infection by P.capsici. Causes large necrotic areas in both host C.annuum and non-host N.benthamiana. The polypeptide is NLP effector protein 14 (Phytophthora capsici).